The following is a 120-amino-acid chain: BLOC-1-related complex subunit 8 (120 aa).

The segment at 101–120 is disordered; that stretch reads MNTSAQGHSQEKLSPPPSLA. Residue serine 109 is modified to Phosphoserine.

This sequence belongs to the BORCS8 family. Component of the BLOC-one-related complex (BORC) which is composed of BLOC1S1, BLOC1S2, BORCS5, BORCS6, BORCS7, BORCS8, KXD1 and SNAPIN.

The protein resides in the lysosome membrane. Its function is as follows. As part of the BLOC-one-related complex (BORC), it plays a role in the movement and localization of lysosomes at the cell periphery. Associated with the cytosolic face of lysosomes, BORC recruits ARL8B to the lysosomal membrane and couples lysosomes to microtubule plus-end-directed kinesin motors, driving lysosome movement toward the cell periphery. The protein is BLOC-1-related complex subunit 8 of Mus musculus (Mouse).